Reading from the N-terminus, the 956-residue chain is Run domain Beclin-1-interacting and cysteine-rich domain-containing protein (956 aa).

An RUN domain is found at 49-190 (WSKYGGLERL…PRLLAQIDAS (142 aa)). Positions 50 to 181 (SKYGGLERLC…CLEAVEQNNP (132 aa)) are interaction with PIK3C3. Phosphoserine is present on serine 198. The interaction with YWHAB stretch occupies residues 205–437 (SQSLTALPGS…ITIIVEDPIA (233 aa)). Positions 233–242 (SLQSMPQSSH) are enriched in low complexity. A disordered region spans residues 233-423 (SLQSMPQSSH…TNIASRGAAG (191 aa)). Phosphoserine is present on residues serine 250 and serine 268. The span at 270 to 319 (AETQTTPAPLPSDSTLAQDSPLTAQEMSDSTLTSPLEASWVSSQNDSPSD) shows a compositional bias: polar residues. The tract at residues 302 to 585 (TSPLEASWVS…DLEIQDADIR (284 aa)) is interaction with UVRAG. Positions 339–371 (ASCESHSSNGESSSSHLFSSSSSQKLESAASSL) are enriched in low complexity. Positions 379–395 (QSQAGSVLRRSSFSEGQ) are enriched in polar residues. A phosphoserine mark is found at serine 390, serine 412, serine 513, and serine 547. The segment at 490 to 542 (AIELMKCNMMSQCLEEEEVEEEDSDREIQELKQKIRLRRQQIRTKNLLPAYRE) is interaction with BECN1. The segment covering 547-566 (SFRVTSSSSQFSSRDSTQLS) has biased composition (low complexity). Residues 547–579 (SFRVTSSSSQFSSRDSTQLSESGSAEDADDLEI) form a disordered region. The tract at residues 552 to 609 (SSSSQFSSRDSTQLSESGSAEDADDLEIQDADIRRSAVSNGKSSFSQNLSHCFLHSTS) is interaction with CYBA. The segment covering 570–579 (SAEDADDLEI) has biased composition (acidic residues). Residue serine 655 is modified to Phosphoserine. Residues 656–744 (PDDGQHADIY…HENAQMVVPS (89 aa)) form an interaction with CARD9 region. Residues 705–956 (CAGCGIRTDP…ALEATVLETT (252 aa)) form an interaction with Rab7 region.

In terms of assembly, associates with PI3K (PI3KC3/PI3K-III/class III phosphatidylinositol 3-kinase) complex II (PI3KC3-C2) in which the core composed of the catalytic subunit PIK3C3, the regulatory subunit PIK3R4 and BECN1 is associated with UVRAG; in the complex interacts directly with PI3KC3 and UVRAG. Interacts with Rab7 (RAB7A or RAB7B) (GTP-bound form); Rab7 and UVRAG compete for RUBCN binding; can interact simultaneously with Rab7 and the PI3K complex. Interacts with CYBA and CYBB; indicative for the association with the CYBA:CYBB NADPH oxidase heterodimer. Interacts with NOX4 and probably associates with the CYBA:NOX4 complex. Interacts with YWHAB and CARD9 in a competitive and stimulation-dependent manner; RUBCN exchanges interaction from YWHAB to CARD9 upon stimulation with beta-1,3-glucan.

The protein resides in the late endosome. It localises to the lysosome. The protein localises to the early endosome. Inhibits PIK3C3 activity; under basal conditions negatively regulates PI3K complex II (PI3KC3-C2) function in autophagy. Negatively regulates endosome maturation and degradative endocytic trafficking and impairs autophagosome maturation process. Can sequester UVRAG from association with a class C Vps complex (possibly the HOPS complex) and negatively regulates Rab7 activation. Functionally, involved in regulation of pathogen-specific host defense of activated macrophages. Following bacterial infection promotes NADH oxidase activity by association with CYBA thereby affecting TLR2 signaling and probably other TLR-NOX pathways. Stabilizes the CYBA:CYBB NADPH oxidase heterodimer, increases its association with TLR2 and its phagosome trafficking to induce antimicrobial burst of ROS and production of inflammatory cytokines. Following fungal or viral infection (implicating CLEC7A (dectin-1)-mediated myeloid cell activation or RIGI-dependent sensing of RNA viruses) negatively regulates pro-inflammatory cytokine production by association with CARD9 and sequestering it from signaling complexes. The polypeptide is Run domain Beclin-1-interacting and cysteine-rich domain-containing protein (Mus musculus (Mouse)).